The chain runs to 359 residues: 3-dehydroquinate synthase (359 aa).

Residues 72 to 77 (DGEHYK), 106 to 110 (GVIGD), 130 to 131 (TT), Lys-143, and Lys-152 contribute to the NAD(+) site. Zn(2+) contacts are provided by Glu-185, His-248, and His-265.

Belongs to the sugar phosphate cyclases superfamily. Dehydroquinate synthase family. Requires Co(2+) as cofactor. Zn(2+) serves as cofactor. The cofactor is NAD(+).

The protein resides in the cytoplasm. The enzyme catalyses 7-phospho-2-dehydro-3-deoxy-D-arabino-heptonate = 3-dehydroquinate + phosphate. Its pathway is metabolic intermediate biosynthesis; chorismate biosynthesis; chorismate from D-erythrose 4-phosphate and phosphoenolpyruvate: step 2/7. Functionally, catalyzes the conversion of 3-deoxy-D-arabino-heptulosonate 7-phosphate (DAHP) to dehydroquinate (DHQ). The chain is 3-dehydroquinate synthase from Thermodesulfovibrio yellowstonii (strain ATCC 51303 / DSM 11347 / YP87).